Here is a 247-residue protein sequence, read N- to C-terminus: uncharacterized protein (247 aa).

4 to 28 (ALVTGGSRGIGRATALLLAQEGYTV) provides a ligand contact to NADP(+). S142 contributes to the substrate binding site. Catalysis depends on Y156, which acts as the Proton acceptor.

This sequence belongs to the short-chain dehydrogenases/reductases (SDR) family.

This is an uncharacterized protein from Escherichia coli (strain K12).